The following is a 214-amino-acid chain: Adenylate kinase (214 aa).

10–15 provides a ligand contact to ATP; sequence GAGKGT. Residues 30–59 form an NMP region; the sequence is ATGDVLRAAVKEGTPLGLEAKAAMDRGDLV. Residues T31, R36, 57 to 59, and Q92 contribute to the AMP site; that span reads DLV. Residues 126–161 are LID; the sequence is GRTTCEACQRPFFGRQPGETCTEGGVSGTLVRRKDD. An ATP-binding site is contributed by R127. Residues R158 and R169 each coordinate AMP. G198 contacts ATP.

It belongs to the adenylate kinase family. As to quaternary structure, monomer.

Its subcellular location is the cytoplasm. The enzyme catalyses AMP + ATP = 2 ADP. Its pathway is purine metabolism; AMP biosynthesis via salvage pathway; AMP from ADP: step 1/1. Its function is as follows. Catalyzes the reversible transfer of the terminal phosphate group between ATP and AMP. Plays an important role in cellular energy homeostasis and in adenine nucleotide metabolism. The protein is Adenylate kinase of Gemmatimonas aurantiaca (strain DSM 14586 / JCM 11422 / NBRC 100505 / T-27).